A 420-amino-acid polypeptide reads, in one-letter code: Gamma-glutamyl phosphate reductase (420 aa).

This sequence belongs to the gamma-glutamyl phosphate reductase family.

It localises to the cytoplasm. It catalyses the reaction L-glutamate 5-semialdehyde + phosphate + NADP(+) = L-glutamyl 5-phosphate + NADPH + H(+). It participates in amino-acid biosynthesis; L-proline biosynthesis; L-glutamate 5-semialdehyde from L-glutamate: step 2/2. Its function is as follows. Catalyzes the NADPH-dependent reduction of L-glutamate 5-phosphate into L-glutamate 5-semialdehyde and phosphate. The product spontaneously undergoes cyclization to form 1-pyrroline-5-carboxylate. In Streptococcus pneumoniae serotype 19F (strain G54), this protein is Gamma-glutamyl phosphate reductase.